Consider the following 506-residue polypeptide: Glutamate--tRNA ligase (506 aa).

Residues 21–31 (PSPTGIPHVGM) carry the 'HIGH' region motif. A 'KMSKS' region motif is present at residues 265 to 269 (KLSKR). An ATP-binding site is contributed by Lys268.

It belongs to the class-I aminoacyl-tRNA synthetase family. Glutamate--tRNA ligase type 1 subfamily. In terms of assembly, monomer.

The protein localises to the cytoplasm. It catalyses the reaction tRNA(Glu) + L-glutamate + ATP = L-glutamyl-tRNA(Glu) + AMP + diphosphate. Functionally, catalyzes the attachment of glutamate to tRNA(Glu) in a two-step reaction: glutamate is first activated by ATP to form Glu-AMP and then transferred to the acceptor end of tRNA(Glu). The chain is Glutamate--tRNA ligase from Bifidobacterium adolescentis (strain ATCC 15703 / DSM 20083 / NCTC 11814 / E194a).